A 125-amino-acid chain; its full sequence is Ribosome-binding factor A (125 aa).

It belongs to the RbfA family. As to quaternary structure, monomer. Binds 30S ribosomal subunits, but not 50S ribosomal subunits or 70S ribosomes.

The protein localises to the cytoplasm. Its function is as follows. One of several proteins that assist in the late maturation steps of the functional core of the 30S ribosomal subunit. Associates with free 30S ribosomal subunits (but not with 30S subunits that are part of 70S ribosomes or polysomes). Required for efficient processing of 16S rRNA. May interact with the 5'-terminal helix region of 16S rRNA. The protein is Ribosome-binding factor A of Wigglesworthia glossinidia brevipalpis.